Consider the following 172-residue polypeptide: Keratin, high-sulfur matrix protein, B2A (172 aa).

Ala-2 bears the N-acetylalanine mark. Repeats lie at residues 27 to 36 (PTCCQTSCCQ), 37 to 46 (PTSIQTSCCQ), 47 to 56 (PISIQTSCCQ), 57 to 66 (PTSIQTSCCQ), and 67 to 76 (PTCLQTSGCE).

Functionally, the keratin products of mammalian epidermal derivatives such as wool and hair consist of microfibrils embedded in a rigid matrix of other proteins. The matrix proteins include the high-sulfur and high-tyrosine keratins, having molecular weights of 6-20 kDa, whereas the microfibrils contain the larger, low-sulfur keratins (40-56 kDa). This chain is Keratin, high-sulfur matrix protein, B2A, found in Ovis aries (Sheep).